The sequence spans 337 residues: Basic membrane protein A2 (337 aa).

Residues 1–17 (MNKLLLLILFECIIFLS) form the signal peptide. The N-palmitoyl cysteine moiety is linked to residue C18. C18 carries the S-diacylglycerol cysteine lipid modification.

Belongs to the BMP lipoprotein family. Monomer.

The protein resides in the cell inner membrane. In terms of biological role, immunogenic protein. May be part of an ABC-type nucleoside uptake system involved in the purine salvage pathway. This Borrelia garinii subsp. bavariensis (strain ATCC BAA-2496 / DSM 23469 / PBi) (Borreliella bavariensis) protein is Basic membrane protein A2 (bmpA2).